The sequence spans 247 residues: 5'-nucleotidase SurE (247 aa).

A divalent metal cation is bound by residues Asp-8, Asp-9, Ser-39, and Asn-91.

Belongs to the SurE nucleotidase family. A divalent metal cation serves as cofactor.

It is found in the cytoplasm. The catalysed reaction is a ribonucleoside 5'-phosphate + H2O = a ribonucleoside + phosphate. Functionally, nucleotidase that shows phosphatase activity on nucleoside 5'-monophosphates. This Methylobacillus flagellatus (strain ATCC 51484 / DSM 6875 / VKM B-1610 / KT) protein is 5'-nucleotidase SurE.